The sequence spans 346 residues: MLVLGIESSCDETGLALYDTQRGLLAHALHSQIAMHRDYGGVVPELASRDHIRRALPLLEEVMAQSGTRRDDIDAIAFTQGPGLAGALLVGASIANALALAWNKPTVGIHHLEGHLLSPLLVDAPPPFPFVALLVSGGHTQLMRVTDVGVYETLGETLDDAAGEAFDKTAKLIGLGYPGGPEVSKLAETGTPGAVVLPRPMLHSGDLDFSFSGLKTAVLTQMKKFEAAKFDGEALERAKADLARGFVDAAVDVLVAKSLAALKKTKLKRLVVAGGVGANRQLRAALSAAAAKRGFDVHYPDLALCTDNGAMIALAGALRLGRWPEQANADYAFTVKPRWDLASLAG.

Fe cation is bound by residues histidine 111 and histidine 115. Substrate-binding positions include 134–138, aspartate 167, glycine 180, and asparagine 279; that span reads LVSGG. A Fe cation-binding site is contributed by aspartate 307.

Belongs to the KAE1 / TsaD family. Requires Fe(2+) as cofactor.

The protein resides in the cytoplasm. The catalysed reaction is L-threonylcarbamoyladenylate + adenosine(37) in tRNA = N(6)-L-threonylcarbamoyladenosine(37) in tRNA + AMP + H(+). Its function is as follows. Required for the formation of a threonylcarbamoyl group on adenosine at position 37 (t(6)A37) in tRNAs that read codons beginning with adenine. Is involved in the transfer of the threonylcarbamoyl moiety of threonylcarbamoyl-AMP (TC-AMP) to the N6 group of A37, together with TsaE and TsaB. TsaD likely plays a direct catalytic role in this reaction. The protein is tRNA N6-adenosine threonylcarbamoyltransferase of Burkholderia cenocepacia (strain ATCC BAA-245 / DSM 16553 / LMG 16656 / NCTC 13227 / J2315 / CF5610) (Burkholderia cepacia (strain J2315)).